A 475-amino-acid chain; its full sequence is Glutamate--tRNA ligase 2 (475 aa).

Positions 9 to 19 (PSPTGFLHIGS) match the 'HIGH' region motif. The 'KMSKS' region signature appears at 238 to 242 (KLSKR). Lys-241 lines the ATP pocket.

This sequence belongs to the class-I aminoacyl-tRNA synthetase family. Glutamate--tRNA ligase type 1 subfamily. As to quaternary structure, monomer.

It is found in the cytoplasm. It catalyses the reaction tRNA(Glu) + L-glutamate + ATP = L-glutamyl-tRNA(Glu) + AMP + diphosphate. Its function is as follows. Catalyzes the attachment of glutamate to tRNA(Glu) in a two-step reaction: glutamate is first activated by ATP to form Glu-AMP and then transferred to the acceptor end of tRNA(Glu). In Bartonella quintana (strain Toulouse) (Rochalimaea quintana), this protein is Glutamate--tRNA ligase 2.